The following is a 668-amino-acid chain: Major S-layer protein (668 aa).

Residues 1–24 form the signal peptide; sequence MKRFAAVTLAALMLLTVFASAASA. 10 N-linked (GlcNAc...) asparagine glycosylation sites follow: Asn-36, Asn-65, Asn-111, Asn-265, Asn-583, Asn-596, Asn-602, Asn-608, Asn-617, and Asn-635. Positions 584–650 are disordered; sequence ETTSITKPDE…ESNGSPGFGV (67 aa). A compositionally biased stretch (polar residues) spans 596 to 611; it reads NETVSDNETMPDNTSS. Residues 631-641 are compositionally biased toward acidic residues; the sequence is EPTDNETEPDE. The helical transmembrane segment at 644-664 threads the bilayer; sequence GSPGFGVVLGLAGLLGVVYLV.

Belongs to the Methanosarcinales S-layer protein family. Post-translationally, glycosylated.

It is found in the secreted. The protein resides in the cell wall. It localises to the S-layer. Its subcellular location is the cell membrane. Functionally, S-layer protein. The S-layer is a paracrystalline mono-layered assembly of proteins which coat the surface of the cell. The polypeptide is Major S-layer protein (Methanosarcina barkeri (strain Fusaro / DSM 804)).